The chain runs to 315 residues: Methionyl-tRNA formyltransferase (315 aa).

113-116 (SLLP) lines the (6S)-5,6,7,8-tetrahydrofolate pocket.

It belongs to the Fmt family.

It catalyses the reaction L-methionyl-tRNA(fMet) + (6R)-10-formyltetrahydrofolate = N-formyl-L-methionyl-tRNA(fMet) + (6S)-5,6,7,8-tetrahydrofolate + H(+). Attaches a formyl group to the free amino group of methionyl-tRNA(fMet). The formyl group appears to play a dual role in the initiator identity of N-formylmethionyl-tRNA by promoting its recognition by IF2 and preventing the misappropriation of this tRNA by the elongation apparatus. This chain is Methionyl-tRNA formyltransferase, found in Escherichia coli O17:K52:H18 (strain UMN026 / ExPEC).